Consider the following 298-residue polypeptide: Syntaxin-4 (298 aa).

The Cytoplasmic segment spans residues 1 to 274 (MRDRTHELRQ…NQKKARKKKV (274 aa)). Residues serine 15, serine 29, serine 35, serine 36, serine 117, serine 208, and serine 248 each carry the phosphoserine modification. Positions 38–163 (DDEFFQKVQT…ERIRRQLKIT (126 aa)) form a coiled coil. Residues 154–298 (ERIRRQLKIT…VIIGITITVG (145 aa)) form an interaction with CENPF region. Residues 200–262 (LNEISARHSE…ERGQEHVKIA (63 aa)) enclose the t-SNARE coiled-coil homology domain. Residues 275 to 295 (MIAICVSVTVLILAVIIGITI) traverse the membrane as a helical; Anchor for type IV membrane protein segment. Residues 296–298 (TVG) are Extracellular-facing.

Belongs to the syntaxin family. In terms of assembly, found in a complex with VAMP8 and SNAP23. Detected in a complex with SNAP23 and STXBP4. Interacts with SNAP23 and SNAPIN. Interacts with VAMP2. Interacts with LLGL1. Interacts (via C-terminus) with CENPF. Interacts with DOC2B. Interacts with STXBP3; excludes interaction with DOC2B and SNAP25. Interacts with STXBP4; excludes interaction with VAMP2. Component of the SNARE complex composed of STX4, SNAP23 and VAMP7 that interacts with SYT7 during lysosomal exocytosis. Interacts with STXBP6. Interacts with STXBP5L. In terms of tissue distribution, expressed in all tissues tested including adipose, brain, testis, intestine, liver, heart, spleen, skeletal muscle and kidney.

The protein localises to the cell membrane. It is found in the cell projection. The protein resides in the neuron projection. It localises to the stereocilium. Plasma membrane t-SNARE that mediates docking of transport vesicles. Necessary for the translocation of SLC2A4 from intracellular vesicles to the plasma membrane. In neurons, recruited at neurite tips to membrane domains rich in the phospholipid 1-oleoyl-2-palmitoyl-PC (OPPC) which promotes neurite tip surface expression of the dopamine transporter SLC6A3/DAT by facilitating fusion of SLC6A3-containing transport vesicles with the plasma membrane. Together with STXB3 and VAMP2, may also play a role in docking/fusion of intracellular GLUT4-containing vesicles with the cell surface in adipocytes and in docking of synaptic vesicles at presynaptic active zones. Required for normal hearing. This is Syntaxin-4 (Stx4) from Rattus norvegicus (Rat).